The primary structure comprises 269 residues: Nitrogen regulatory protein DAL80 (269 aa).

The GATA-type zinc-finger motif lies at 31–55 (CQNCFTVKTPLWRRDEHGTVLCNAC).

It localises to the nucleus. Functionally, negative regulator of multiple nitrogen catabolic genes including the allantoin pathway genes. In Saccharomyces cerevisiae (strain ATCC 204508 / S288c) (Baker's yeast), this protein is Nitrogen regulatory protein DAL80 (DAL80).